A 343-amino-acid polypeptide reads, in one-letter code: Uroporphyrinogen decarboxylase (343 aa).

Substrate-binding positions include R21–R25, D71, Y148, S203, and H316.

The protein belongs to the uroporphyrinogen decarboxylase family. As to quaternary structure, homodimer.

The protein resides in the cytoplasm. It catalyses the reaction uroporphyrinogen III + 4 H(+) = coproporphyrinogen III + 4 CO2. It functions in the pathway porphyrin-containing compound metabolism; protoporphyrin-IX biosynthesis; coproporphyrinogen-III from 5-aminolevulinate: step 4/4. Catalyzes the decarboxylation of four acetate groups of uroporphyrinogen-III to yield coproporphyrinogen-III. The protein is Uroporphyrinogen decarboxylase of Campylobacter fetus subsp. fetus (strain 82-40).